A 599-amino-acid chain; its full sequence is Crinkler effector protein 8 (599 aa).

An N-terminal signal peptide occupies residues 1–17; the sequence is MVTLFCAVVGVAGSTFP. Residues 18-52 form an LQLFLAK domain region; sequence VDINENKSVGHLKKAIKEEKMYQFPADELQLFLAK. Asn-23 is a glycosylation site (N-linked (GlcNAc...) asparagine). The DWL domain stretch occupies residues 53–109; sequence AGGNAWLSSLTEDVKKLKKGEKTALVKSLTQEEKELQGEDPISECLEGMDPPKVKQI. Residues 110–116 carry the HVLVXXP motif motif; it reads HVLVALP. A C-terminal D2 effector domain region spans residues 117–590; that stretch reads PGTSSAPISD…EAAEQESQGK (474 aa). Residues Ser-249, Ser-281, and Ser-385 each carry the phosphoserine modification. Residues 289–590 enclose the Protein kinase domain; the sequence is LSKKLVWSYG…EAAEQESQGK (302 aa). Catalysis depends on Asp-470, which acts as the Proton acceptor. Ser-474 and Ser-587 each carry phosphoserine. The tract at residues 577–599 is disordered; sequence RFEREAAEQESQGKGVRKKHRRA. The Host nuclear localization signal signature appears at 590–599; the sequence is KGVRKKHRRA.

The protein in the N-terminal section; belongs to the Crinkler effector family. In the C-terminal section; belongs to the protein kinase superfamily. In terms of assembly, dimerizes in host plants. In terms of processing, autophosphorylated at Ser-249, Ser-281, Ser-385, Ser-474 and Ser-587. Additional serines or threonines are also targeted for phosphorylation.

Its subcellular location is the secreted. It localises to the host nucleus. The catalysed reaction is L-seryl-[protein] + ATP = O-phospho-L-seryl-[protein] + ADP + H(+). The enzyme catalyses L-threonyl-[protein] + ATP = O-phospho-L-threonyl-[protein] + ADP + H(+). Secreted effector that induces cell death when expressed in host plants. Acts as a kinase and is able to autophosphorylate, however its cell death inducing ability is not a direct result of its kinase activity, but rather a consequence of the phosphorylated state of the five identified serine residues in the CRN8 protein. The protein is Crinkler effector protein 8 of Phytophthora infestans (Potato late blight agent).